The primary structure comprises 186 residues: Large ribosomal subunit protein uL5 (186 aa).

Belongs to the universal ribosomal protein uL5 family. In terms of assembly, part of the 50S ribosomal subunit; part of the 5S rRNA/L5/L18/L25 subcomplex. Contacts the 5S rRNA and the P site tRNA. Forms a bridge to the 30S subunit in the 70S ribosome.

Functionally, this is one of the proteins that bind and probably mediate the attachment of the 5S RNA into the large ribosomal subunit, where it forms part of the central protuberance. In the 70S ribosome it contacts protein S13 of the 30S subunit (bridge B1b), connecting the 2 subunits; this bridge is implicated in subunit movement. Contacts the P site tRNA; the 5S rRNA and some of its associated proteins might help stabilize positioning of ribosome-bound tRNAs. The chain is Large ribosomal subunit protein uL5 from Cereibacter sphaeroides (strain ATCC 17023 / DSM 158 / JCM 6121 / CCUG 31486 / LMG 2827 / NBRC 12203 / NCIMB 8253 / ATH 2.4.1.) (Rhodobacter sphaeroides).